A 239-amino-acid polypeptide reads, in one-letter code: Ribonuclease HII (239 aa).

The 192-residue stretch at 30-221 (GPVAGVDEVG…VRRVANGSGG (192 aa)) folds into the RNase H type-2 domain. A divalent metal cation-binding residues include Asp-36, Glu-37, and Asp-130.

Belongs to the RNase HII family. Mn(2+) serves as cofactor. It depends on Mg(2+) as a cofactor.

The protein resides in the cytoplasm. It carries out the reaction Endonucleolytic cleavage to 5'-phosphomonoester.. Endonuclease that specifically degrades the RNA of RNA-DNA hybrids. The chain is Ribonuclease HII from Mycolicibacterium paratuberculosis (strain ATCC BAA-968 / K-10) (Mycobacterium paratuberculosis).